The chain runs to 110 residues: Small ribosomal subunit protein uS10 (110 aa).

It belongs to the universal ribosomal protein uS10 family. As to quaternary structure, part of the 30S ribosomal subunit.

Its function is as follows. Involved in the binding of tRNA to the ribosomes. The protein is Small ribosomal subunit protein uS10 of Ehrlichia ruminantium (strain Gardel).